A 458-amino-acid chain; its full sequence is tRNA modification GTPase MnmE (458 aa).

(6S)-5-formyl-5,6,7,8-tetrahydrofolate is bound by residues Arg22, Glu84, and Arg123. Positions 220–379 (GIATAIIGRP…LEKAIADLFF (160 aa)) constitute a TrmE-type G domain. Asn230 serves as a coordination point for K(+). Residues 230–235 (NVGKSS), 249–255 (TDIAGTT), and 274–277 (DTAG) contribute to the GTP site. Ser234 is a binding site for Mg(2+). The K(+) site is built by Thr249, Ile251, and Thr254. Thr255 contributes to the Mg(2+) binding site. Position 458 (Lys458) interacts with (6S)-5-formyl-5,6,7,8-tetrahydrofolate.

Belongs to the TRAFAC class TrmE-Era-EngA-EngB-Septin-like GTPase superfamily. TrmE GTPase family. In terms of assembly, homodimer. Heterotetramer of two MnmE and two MnmG subunits. The cofactor is K(+).

It localises to the cytoplasm. Functionally, exhibits a very high intrinsic GTPase hydrolysis rate. Involved in the addition of a carboxymethylaminomethyl (cmnm) group at the wobble position (U34) of certain tRNAs, forming tRNA-cmnm(5)s(2)U34. This is tRNA modification GTPase MnmE from Bacillus anthracis.